A 406-amino-acid chain; its full sequence is L-methionine gamma-lyase (406 aa).

Residues 76 to 78 (YQR) and 106 to 107 (GM) each bind pyridoxal 5'-phosphate. Tyr-132 is a binding site for L-homocysteine. 219 to 221 (SAT) serves as a coordination point for pyridoxal 5'-phosphate. Lys-222 carries the N6-(pyridoxal phosphate)lysine modification. L-homocysteine is bound at residue Arg-380. Arg-380 serves as a coordination point for L-methionine.

Belongs to the trans-sulfuration enzymes family. L-methionine gamma-lyase subfamily. As to quaternary structure, homotetramer. Pyridoxal 5'-phosphate serves as cofactor.

It catalyses the reaction L-methionine + H2O = methanethiol + 2-oxobutanoate + NH4(+). The enzyme catalyses L-homocysteine + H2O = 2-oxobutanoate + hydrogen sulfide + NH4(+) + H(+). Is inhibited in vitro by carbonyl reagents, completely inactivated by DL-propargylglycine, and unaffected by metal-chelating agents. Functionally, catalyzes the alpha,gamma-elimination of L-methionine to produce methanethiol, 2-oxobutanoate and ammonia. May be responsible for the production of methanethiol associated with desirable Cheddar-type sulfur notes during cheese ripening. Is also able to catalyze the alpha,gamma-elimination of L-homocysteine and DL-selenomethionine, but has no activity toward L-cysteine, L-cystathionine, S-adenosyl-L-homocysteine and D-methionine. This chain is L-methionine gamma-lyase, found in Brevibacterium aurantiacum.